The following is a 1700-amino-acid chain: Balbiani ring protein 3 (1700 aa).

The N-terminal stretch at 1 to 20 is a signal peptide; sequence MKTLSSLLLVLAVNVLLIQA.

In terms of tissue distribution, salivary gland.

The protein localises to the secreted. In terms of biological role, used by the larvae to construct a supramolecular structure, the larval tube. Balbiani ring protein 3 could play a role as a transport protein that binds to other proteins intracellularly and in the gland lumen in order to prevent these from forming water-insoluble fibers too early. The protein is Balbiani ring protein 3 (BR3) of Chironomus tentans (Midge).